A 179-amino-acid chain; its full sequence is IMPACT family member in pol 5'region (179 aa).

Belongs to the IMPACT family.

The protein is IMPACT family member in pol 5'region of Thermus thermophilus.